The sequence spans 196 residues: uncharacterized protein (196 aa).

S-adenosyl-L-methionine-binding positions include 44-46 (TTA), Gly-80, Val-100, and 107-109 (PSL).

This sequence belongs to the class IV-like SAM-binding methyltransferase superfamily. RNA methyltransferase TrmH family.

This is an uncharacterized protein from Serratia marcescens.